The following is a 321-amino-acid chain: Phospho-N-acetylmuramoyl-pentapeptide-transferase (321 aa).

A run of 10 helical transmembrane segments spans residues 1–21 (MIFVYALLALVITFVLVPVLI), 50–70 (MGGLTFLLSIVITSLVVIIFV), 76–96 (IILLLFVTIGFGLIGFIDDYI), 112–132 (FLAQIGIAIIFFVLSNVFHLV), 140–160 (IPFTNVAIPLSFAYVIFIVFW), 176–196 (GLATGLSIIGFTMYAIMSFVL), 200–220 (AIGIFCIIMLFALLGFLPYNI), 225–245 (VFMGDTGSLALGGIFATISIM), 250–270 (LSLIFIGLVFVIETLSVMLQV), and 300–320 (VVTVFWAVGLISGLIGLWIGV).

The protein belongs to the glycosyltransferase 4 family. MraY subfamily. It depends on Mg(2+) as a cofactor.

The protein resides in the cell membrane. The catalysed reaction is UDP-N-acetyl-alpha-D-muramoyl-L-alanyl-gamma-D-glutamyl-L-lysyl-D-alanyl-D-alanine + di-trans,octa-cis-undecaprenyl phosphate = Mur2Ac(oyl-L-Ala-gamma-D-Glu-L-Lys-D-Ala-D-Ala)-di-trans,octa-cis-undecaprenyl diphosphate + UMP. It participates in cell wall biogenesis; peptidoglycan biosynthesis. Its function is as follows. Catalyzes the initial step of the lipid cycle reactions in the biosynthesis of the cell wall peptidoglycan: transfers peptidoglycan precursor phospho-MurNAc-pentapeptide from UDP-MurNAc-pentapeptide onto the lipid carrier undecaprenyl phosphate, yielding undecaprenyl-pyrophosphoryl-MurNAc-pentapeptide, known as lipid I. In Staphylococcus aureus (strain MSSA476), this protein is Phospho-N-acetylmuramoyl-pentapeptide-transferase.